Reading from the N-terminus, the 301-residue chain is Glycine--tRNA ligase alpha subunit (301 aa).

It belongs to the class-II aminoacyl-tRNA synthetase family. Tetramer of two alpha and two beta subunits.

The protein localises to the cytoplasm. It catalyses the reaction tRNA(Gly) + glycine + ATP = glycyl-tRNA(Gly) + AMP + diphosphate. The polypeptide is Glycine--tRNA ligase alpha subunit (Shewanella piezotolerans (strain WP3 / JCM 13877)).